The following is a 90-amino-acid chain: UPF0298 protein SSU98_1559 (90 aa).

Belongs to the UPF0298 family.

It localises to the cytoplasm. The protein is UPF0298 protein SSU98_1559 of Streptococcus suis (strain 98HAH33).